Consider the following 231-residue polypeptide: Claudin-10 (231 aa).

A helical membrane pass occupies residues 1–21 (MASTALEIVAFVVSISGWVLV). Residues 22 to 80 (SSTLPTDYWKVSTIDGTVITTATYFANLWKICVTDSTGVANCKEFPSMLALDGYIQACR) are Extracellular-facing. A helical transmembrane segment spans residues 81-101 (GLMIAAVSLGFFGSIFALFGM). The Cytoplasmic portion of the chain corresponds to 102-115 (KCTKVGGSDQAKAK). The helical transmembrane segment at 116–136 (IACLAGIVFILSGLCSMTGCS) threads the bilayer. Residues 137–160 (LYANKITTEFFDPLYMEQKYELGA) are Extracellular-facing. Residues 161-181 (ALFIGWAGASLCIIGGVIFCF) form a helical membrane-spanning segment. Topologically, residues 182 to 231 (SISDNNKTPRMGYTYNGPTSAMSSRTKYQGGEGDFKTTGPSKQFDKNAYV) are cytoplasmic.

This sequence belongs to the claudin family. Can form homodimers both in trans (interaction between CLDN10 molecules in opposing membranes) and in cis (interaction between CLDN10 molecules within one membrane). Interacts with CLDN19. As to expression, widely expressed, with highest expression detected in brain cortex, kidney and lung. In kidney, the expression is highest in medulla, with transcripts being detected in medullary thick ascending limb of Henle's loop (mTAL) and outer and inner medullary collecting ducts. Expressed in salivary glands and skin. In terms of tissue distribution, detected in kidney with transcripts being detected in PCT, mTAL and cortical collecting duct. Detected in uterus. Expressed in proximal tubules (at protein level). Only detected in kidney and uterus. As to expression, detected in kidney with transcripts being detected in PCT, mTAL and cortical collecting duct. Detected in uterus. In terms of tissue distribution, expressed in the inner ear where it is detected in organ of Corti, marginal cells of stria vascularis, Reissner's membrane and spiral limbus (at protein level).

Its subcellular location is the cell junction. It is found in the tight junction. The protein localises to the cell membrane. It localises to the endoplasmic reticulum. The catalysed reaction is Na(+)(in) = Na(+)(out). It catalyses the reaction Li(+)(in) = Li(+)(out). It carries out the reaction K(+)(in) = K(+)(out). The enzyme catalyses Rb(+)(in) = Rb(+)(out). The catalysed reaction is Cs(+)(in) = Cs(+)(out). It catalyses the reaction NH4(+)(in) = NH4(+)(out). It carries out the reaction methylamine(out) = methylamine(in). The enzyme catalyses Mg(2+)(in) = Mg(2+)(out). The catalysed reaction is Ca(2+)(in) = Ca(2+)(out). It catalyses the reaction Sr(2+)(in) = Sr(2+)(out). It carries out the reaction chloride(in) = chloride(out). The enzyme catalyses nitrate(in) = nitrate(out). Its function is as follows. Forms paracellular channels: polymerizes in tight junction strands with cation- and anion-selective channels through the strands, conveying epithelial permeability in a process known as paracellular tight junction permeability. Forms cation-selective paracellular channels. In sweat glands and in the thick ascending limb (TAL) of Henle's loop in kidney, it controls paracellular sodium permeability which is essential for proper sweat production and renal function. Functionally, forms anion-selective paracellular channels. In renal proximal tubules, it conveys selective chloride over hydrogencarbonate anion permeability which is required for renal chloride reabsorption and salt homeostasis. This is Claudin-10 from Mus musculus (Mouse).